We begin with the raw amino-acid sequence, 57 residues long: MDIRIMAEKLGFKRVYKEDCELCIMGYTGKRCKYLRKIGKEFYCVRDAAKKDPRLRF.

This is an uncharacterized protein from Archaeoglobus fulgidus (strain ATCC 49558 / DSM 4304 / JCM 9628 / NBRC 100126 / VC-16).